We begin with the raw amino-acid sequence, 103 residues long: Small ribosomal subunit protein uS10 (103 aa).

It belongs to the universal ribosomal protein uS10 family. In terms of assembly, part of the 30S ribosomal subunit.

In terms of biological role, involved in the binding of tRNA to the ribosomes. This chain is Small ribosomal subunit protein uS10, found in Campylobacter lari (strain RM2100 / D67 / ATCC BAA-1060).